The chain runs to 33 residues: MSLEVILQLGSILLVVAAGPLVIVLLSVNEGNL.

A helical membrane pass occupies residues 5 to 25; that stretch reads VILQLGSILLVVAAGPLVIVL.

Belongs to the Psb30/Ycf12 family. As to quaternary structure, PSII is composed of 1 copy each of membrane proteins PsbA, PsbB, PsbC, PsbD, PsbE, PsbF, PsbH, PsbI, PsbJ, PsbK, PsbL, PsbM, PsbT, PsbX, PsbY, PsbZ, Psb30/Ycf12, peripheral proteins of the oxygen-evolving complex and a large number of cofactors. It forms dimeric complexes.

The protein localises to the plastid. Its subcellular location is the chloroplast thylakoid membrane. Functionally, a core subunit of photosystem II (PSII), probably helps stabilize the reaction center. The polypeptide is Photosystem II reaction center protein Psb30 (Oltmannsiellopsis viridis (Marine flagellate)).